The sequence spans 384 residues: Autophagy-related protein 25 (384 aa).

Coiled-coil stretches lie at residues 132–236 and 342–379; these read KETA…RRAS and KKNN…QWKT. The interval 224–247 is disordered; that stretch reads ESRLSNMNKRRASPRDDAEAEPKR. Residues 236–247 are compositionally biased toward basic and acidic residues; it reads SPRDDAEAEPKR.

This sequence belongs to the ADIP family.

It is found in the preautophagosomal structure membrane. Functionally, specifically required for selective degradation of peroxisomes via macropexophagy. In Pichia angusta (Yeast), this protein is Autophagy-related protein 25 (ATG25).